A 212-amino-acid chain; its full sequence is Adenylate kinase (212 aa).

10 to 15 (GAGKGT) serves as a coordination point for ATP. Residues 30–59 (STGDMFRAAMVNQTEMGVLAKSYIDKGELV) are NMP. Residues Thr-31, Arg-36, 57–59 (ELV), 86–89 (GYPR), and Gln-93 contribute to the AMP site. Positions 127–159 (GRIIHRVTGETFHKVFNPPVDYKEEDYYQREDD) are LID. ATP is bound by residues Arg-128 and 137–138 (TF). Residues Arg-156 and Arg-167 each coordinate AMP. Gln-195 lines the ATP pocket.

This sequence belongs to the adenylate kinase family. Monomer.

It localises to the cytoplasm. The catalysed reaction is AMP + ATP = 2 ADP. The protein operates within purine metabolism; AMP biosynthesis via salvage pathway; AMP from ADP: step 1/1. Catalyzes the reversible transfer of the terminal phosphate group between ATP and AMP. Plays an important role in cellular energy homeostasis and in adenine nucleotide metabolism. The polypeptide is Adenylate kinase (Streptococcus pneumoniae (strain 70585)).